Here is a 460-residue protein sequence, read N- to C-terminus: MAPPRKGELSPEEKDLLGVIAKGNVEEAGRLLGSKNVHVNCLDEHGMTPLMHAAYKGKVDMCRLLLRHGADVNCNEHEHGYTALMFAGLSGNKEITWMMLEAGAETDVVNSVGRTAAQMAAFVGQHDCVTIINNFFPRERLDYYTKPQGLDKEPKLPVKLAGPLHKIITTTNMHPVKIVLLVKENPLLAEVEALQKCYRVLDLICEKCMKQKDMNEVLAMKMHYISCIFQKCVTFLKEREDKLDGFIKSLLKGRDKDGFPVYQEKLIRESIRKFPYCEATLLQQLVRSIAPVELGSDPTAFSVLTQAITGQVGFVDAEFCTTCGEKGADKRCSVCKVVMYCDQNCQKTHWFTHKKVCKTLKEIHEKQELEAAKEKRRQEKKQKKDEAQLEEAGATSEEQSAPGPDATKEADPNLWIQTDQTEETELTKEPEARAPRPDSPLESETALADIALQKIQDSEE.

ANK repeat units follow at residues 45 to 74, 79 to 108, and 159 to 188; these read HGMT…DVNC, HGYT…ETDV, and KLAG…NPLL. 8 residues coordinate Zn(2+): cysteine 320, cysteine 323, cysteine 332, cysteine 335, cysteine 341, cysteine 345, histidine 353, and cysteine 357. The MYND-type zinc finger occupies 320–357; the sequence is CTTCGEKGADKRCSVCKVVMYCDQNCQKTHWFTHKKVC. Composition is skewed to basic and acidic residues over residues 371–387 and 425–436; these read AAKE…KDEA and ELTKEPEARAPR. Positions 371-460 are disordered; the sequence is AAKEKRRQEK…ALQKIQDSEE (90 aa).

It is found in the cell projection. It localises to the cilium. In terms of biological role, may be involved in the trafficking of signaling proteins to the cilia. The polypeptide is Ankyrin repeat and MYND domain-containing protein 2 (ANKMY2) (Gallus gallus (Chicken)).